A 388-amino-acid polypeptide reads, in one-letter code: Large ribosomal subunit protein uL3B (388 aa).

The span at 1–10 (MSHCKFEQPR) shows a compositional bias: basic and acidic residues. Residues 1–34 (MSHCKFEQPRHGSLGFLPRKRASRQRGKVKAFPK) form a disordered region. A compositionally biased stretch (basic residues) spans 18-31 (PRKRASRQRGKVKA).

It belongs to the universal ribosomal protein uL3 family. Component of the large ribosomal subunit (LSU). Mature yeast ribosomes consist of a small (40S) and a large (60S) subunit. The 40S small subunit contains 1 molecule of ribosomal RNA (18S rRNA) and at least 33 different proteins. The large 60S subunit contains 3 rRNA molecules (25S, 5.8S and 5S rRNA) and at least 46 different proteins. uL3 forms together with ES39L one of the contact sites for the signal recognition particle that targets ribosomes to the endoplasmic reticulum membrane.

It is found in the cytoplasm. Functionally, component of the ribosome, a large ribonucleoprotein complex responsible for the synthesis of proteins in the cell. The small ribosomal subunit (SSU) binds messenger RNAs (mRNAs) and translates the encoded message by selecting cognate aminoacyl-transfer RNA (tRNA) molecules. The large subunit (LSU) contains the ribosomal catalytic site termed the peptidyl transferase center (PTC), which catalyzes the formation of peptide bonds, thereby polymerizing the amino acids delivered by tRNAs into a polypeptide chain. The nascent polypeptides leave the ribosome through a tunnel in the LSU and interact with protein factors that function in enzymatic processing, targeting, and the membrane insertion of nascent chains at the exit of the ribosomal tunnel. uL3 plays a role in coordinating processes of accommodating the aminoacyl-tRNA in the PTC. This Schizosaccharomyces pombe (strain 972 / ATCC 24843) (Fission yeast) protein is Large ribosomal subunit protein uL3B (rpl302).